We begin with the raw amino-acid sequence, 93 residues long: UPF0358 protein BH2626 (93 aa).

This sequence belongs to the UPF0358 family.

The chain is UPF0358 protein BH2626 from Halalkalibacterium halodurans (strain ATCC BAA-125 / DSM 18197 / FERM 7344 / JCM 9153 / C-125) (Bacillus halodurans).